We begin with the raw amino-acid sequence, 370 residues long: Actin-related protein 2/3 complex subunit 1A-A (370 aa).

WD repeat units lie at residues 6-45, 50-89, 140-179, 202-241, 244-284, and 322-365; these read FLLEPISCHAWNKDLTQIAISPNNHEVHIYKKSGDQWVKG, EHNGHITGIDWAPKSDRIVTCGADRNAYVWSQKDGVWKPT, PIRSTVLSLDWHPNNVLLAAGSCDFKTRVFSAYIKEVDEK, SSGGWVHSVSFSASGNKLAWVSHDSTVSVADASKNMSVSQ, TEFL…TFVS, and LHQN…SYIQ.

The protein belongs to the WD repeat ARPC1 family. As to quaternary structure, component of the Arp2/3 complex.

It localises to the cytoplasm. The protein localises to the cytoskeleton. The protein resides in the nucleus. Functionally, probably functions as a component of the Arp2/3 complex which is involved in regulation of actin polymerization and together with an activating nucleation-promoting factor (NPF) mediates the formation of branched actin networks. In addition to its role in the cytoplasmic cytoskeleton, the Arp2/3 complex also promotes actin polymerization in the nucleus, thereby regulating gene transcription and repair of damaged DNA. The polypeptide is Actin-related protein 2/3 complex subunit 1A-A (arpc1a-a) (Xenopus laevis (African clawed frog)).